The sequence spans 436 residues: GTPase Obg (436 aa).

One can recognise an Obg domain in the interval 2-160 (SMFLDTAKIK…RELQLELKIL (159 aa)). Residues 161-338 (ADVGLVGFPS…LLDATAELLD (178 aa)) enclose the OBG-type G domain. GTP contacts are provided by residues 167 to 174 (GFPSVGKS), 192 to 196 (FTTIV), 214 to 217 (DLPG), 284 to 287 (NKMD), and 319 to 321 (SGL). Residues serine 174 and threonine 194 each coordinate Mg(2+). The 79-residue stretch at 358 to 436 (GFDEEEKAFE…IGKFEFEFVD (79 aa)) folds into the OCT domain.

It belongs to the TRAFAC class OBG-HflX-like GTPase superfamily. OBG GTPase family. In terms of assembly, monomer. Mg(2+) serves as cofactor.

Its subcellular location is the cytoplasm. In terms of biological role, an essential GTPase which binds GTP, GDP and possibly (p)ppGpp with moderate affinity, with high nucleotide exchange rates and a fairly low GTP hydrolysis rate. Plays a role in control of the cell cycle, stress response, ribosome biogenesis and in those bacteria that undergo differentiation, in morphogenesis control. This is GTPase Obg from Streptococcus pneumoniae (strain CGSP14).